Reading from the N-terminus, the 209-residue chain is Probable chalcone--flavanone isomerase 3 (209 aa).

Belongs to the chalcone isomerase family.

The enzyme catalyses a chalcone = a flavanone.. Its pathway is secondary metabolite biosynthesis; flavonoid biosynthesis. Its function is as follows. Involved in anthocyanin biosynthesis. In Arabidopsis thaliana (Mouse-ear cress), this protein is Probable chalcone--flavanone isomerase 3 (CHI3).